The primary structure comprises 267 residues: L-aspartate dehydrogenase (267 aa).

2 residues coordinate NAD(+): Ala124 and Asn190. His218 is an active-site residue.

This sequence belongs to the L-aspartate dehydrogenase family.

It catalyses the reaction L-aspartate + NADP(+) + H2O = oxaloacetate + NH4(+) + NADPH + H(+). The enzyme catalyses L-aspartate + NAD(+) + H2O = oxaloacetate + NH4(+) + NADH + H(+). It functions in the pathway cofactor biosynthesis; NAD(+) biosynthesis; iminoaspartate from L-aspartate (dehydrogenase route): step 1/1. Specifically catalyzes the NAD or NADP-dependent dehydrogenation of L-aspartate to iminoaspartate. The polypeptide is L-aspartate dehydrogenase (Methanococcus maripaludis (strain DSM 14266 / JCM 13030 / NBRC 101832 / S2 / LL)).